We begin with the raw amino-acid sequence, 273 residues long: MGSKEDAGKGCPAAGGVSSFTIQSILGGGPSEAPREPVGWPARKRSLSVSSEEEEPDDGWKAPACFCPDQHGPKEQGPKHHPPIPFPCLGTPKGSGGSGPGGLERTPFLSPSHSDFKEEKERLLPAGSPSPGSERPRDGGAERQAGAAKKKTRTVFSRSQVYQLESTFDMKRYLSSSERACLASSLQLTETQVKTWFQNRRNKWKRQLSAELEAANMAHASAQTLVSMPLVFRDSSLLRVPVPRSLAFPAPLYYPGSNLSALPLYNLYNKLDY.

Residues 1–152 form a disordered region; the sequence is MGSKEDAGKG…RQAGAAKKKT (152 aa). The span at 93–102 shows a compositional bias: gly residues; the sequence is KGSGGSGPGG. Basic and acidic residues predominate over residues 114–123; sequence SDFKEEKERL. The segment at residues 149–208 is a DNA-binding region (homeobox); it reads KKKTRTVFSRSQVYQLESTFDMKRYLSSSERACLASSLQLTETQVKTWFQNRRNKWKRQL.

Belongs to the HMX homeobox family.

Its subcellular location is the nucleus. Transcription factor involved in specification of neuronal cell types and which is required for inner ear and hypothalamus development. In Homo sapiens (Human), this protein is Homeobox protein HMX2 (HMX2).